Consider the following 420-residue polypeptide: Mitogen-activated protein kinase HOG2 (420 aa).

Residues 29–37 and lysine 52 each bind ATP; that span reads VGMGAFGLV. Catalysis depends on aspartate 144, which acts as the Proton acceptor. Threonine 174 is modified (phosphothreonine). A TXY motif is present at residues 174-176; it reads TGY. Tyrosine 176 is subject to Phosphotyrosine. The disordered stretch occupies residues 372-394; sequence AQHHHQTQQQSSGKHTNPTTSSS.

Belongs to the protein kinase superfamily. Ser/Thr protein kinase family. MAP kinase subfamily. HOG1 sub-subfamily. The cofactor is Mg(2+). Post-translationally, dually phosphorylated on Thr-174 and Tyr-176, which activates the enzyme.

Its subcellular location is the cytoplasm. It localises to the nucleus. The enzyme catalyses L-seryl-[protein] + ATP = O-phospho-L-seryl-[protein] + ADP + H(+). It carries out the reaction L-threonyl-[protein] + ATP = O-phospho-L-threonyl-[protein] + ADP + H(+). Activated by tyrosine and threonine phosphorylation. Its function is as follows. Mitogen-activated protein kinase involved in a signal transduction pathway that is activated by changes in the osmolarity of the extracellular environment. Controls osmotic regulation of transcription of target genes. The chain is Mitogen-activated protein kinase HOG2 (HOG2) from Zygosaccharomyces rouxii.